We begin with the raw amino-acid sequence, 1057 residues long: Carbamoyl phosphate synthase large chain (1057 aa).

The tract at residues 1–401 is carboxyphosphate synthetic domain; it reads MPKRNDIKTI…SLLKAIRSLE (401 aa). Positions 129, 169, 175, 176, 208, 210, 215, 241, 242, 243, 284, and 298 each coordinate ATP. The 195-residue stretch at 133 to 327 folds into the ATP-grasp 1 domain; that stretch reads RTLMNDLNVP…IAKLAAKIAV (195 aa). Mg(2+)-binding residues include glutamine 284, glutamate 298, and asparagine 300. 3 residues coordinate Mn(2+): glutamine 284, glutamate 298, and asparagine 300. The segment at 402–546 is oligomerization domain; it reads YGVHHLGLPN…YGTYETENES (145 aa). Residues 547–929 are carbamoyl phosphate synthetic domain; the sequence is IVTDKEKILV…ALFKGLTGSG (383 aa). The 191-residue stretch at 671–861 folds into the ATP-grasp 2 domain; sequence EALLRKINVP…MAQLAMRAII (191 aa). The ATP site is built by arginine 707, arginine 746, leucine 748, glutamate 752, glycine 777, valine 778, histidine 779, serine 780, glutamine 820, and glutamate 832. Mg(2+)-binding residues include glutamine 820, glutamate 832, and asparagine 834. Mn(2+) contacts are provided by glutamine 820, glutamate 832, and asparagine 834. Residues 930-1057 enclose the MGS-like domain; the sequence is VEVKDHGTVL…ESMTFTMRQM (128 aa). An allosteric domain region spans residues 930–1057; sequence VEVKDHGTVL…ESMTFTMRQM (128 aa).

It belongs to the CarB family. In terms of assembly, composed of two chains; the small (or glutamine) chain promotes the hydrolysis of glutamine to ammonia, which is used by the large (or ammonia) chain to synthesize carbamoyl phosphate. Tetramer of heterodimers (alpha,beta)4. It depends on Mg(2+) as a cofactor. Mn(2+) serves as cofactor.

The catalysed reaction is hydrogencarbonate + L-glutamine + 2 ATP + H2O = carbamoyl phosphate + L-glutamate + 2 ADP + phosphate + 2 H(+). It catalyses the reaction hydrogencarbonate + NH4(+) + 2 ATP = carbamoyl phosphate + 2 ADP + phosphate + 2 H(+). Its pathway is amino-acid biosynthesis; L-arginine biosynthesis; carbamoyl phosphate from bicarbonate: step 1/1. The protein operates within pyrimidine metabolism; UMP biosynthesis via de novo pathway; (S)-dihydroorotate from bicarbonate: step 1/3. In terms of biological role, large subunit of the glutamine-dependent carbamoyl phosphate synthetase (CPSase). CPSase catalyzes the formation of carbamoyl phosphate from the ammonia moiety of glutamine, carbonate, and phosphate donated by ATP, constituting the first step of 2 biosynthetic pathways, one leading to arginine and/or urea and the other to pyrimidine nucleotides. The large subunit (synthetase) binds the substrates ammonia (free or transferred from glutamine from the small subunit), hydrogencarbonate and ATP and carries out an ATP-coupled ligase reaction, activating hydrogencarbonate by forming carboxy phosphate which reacts with ammonia to form carbamoyl phosphate. The sequence is that of Carbamoyl phosphate synthase large chain from Staphylococcus aureus (strain MW2).